A 642-amino-acid polypeptide reads, in one-letter code: Tigger transposable element-derived protein 5 (642 aa).

2 stretches are compositionally biased toward pro residues: residues 1 to 10 (MYPAGPPAGP) and 19 to 43 (LPGPPAPAPAPVPAARPPPPAPGPR). Residues 1–45 (MYPAGPPAGPVPRRGRRPLPGPPAPAPAPVPAARPPPPAPGPRPR) are disordered. In terms of domain architecture, HTH psq-type spans 47-98 (AVKMAFRKAYSIKDKLQAIERVKGGERQASVCRDFGVPGGTLRGWLKDEPKL). 2 DNA-binding regions (H-T-H motif) span residues 74–94 (QASVCRDFGVPGGTLRGWLKD) and 145–178 (PLIQAQAEAFARQIYGPECTFKASHGWFWRWQKR). Residues 112-185 (QRKKMRLANE…QKRHGISSQR (74 aa)) enclose the HTH CENPB-type domain. Residues 185–233 (RFYGEAGPPAPSPAPGPPVKEEPALPSGAGPLPDRAPAPPPPAEGGYGD) form a disordered region. 2 stretches are compositionally biased toward pro residues: residues 192-202 (PPAPSPAPGPP) and 218-227 (DRAPAPPPPA). DDE-1 domains lie at 233–357 (DEQI…VLLV) and 410–477 (RAHI…ERCW). The disordered stretch occupies residues 535-587 (LDDDGGPPEGCREEVGPALPPAAPPAPASLPSAMGGGEDEEEATDYGGTSVPT). Positions 552 to 562 (ALPPAAPPAPA) are enriched in pro residues.

The protein belongs to the tigger transposable element derived protein family.

The protein localises to the nucleus. The sequence is that of Tigger transposable element-derived protein 5 (TIGD5) from Homo sapiens (Human).